The chain runs to 149 residues: Cell division protein SepF (149 aa).

It belongs to the SepF family. In terms of assembly, homodimer. Interacts with FtsZ.

It localises to the cytoplasm. In terms of biological role, cell division protein that is part of the divisome complex and is recruited early to the Z-ring. Probably stimulates Z-ring formation, perhaps through the cross-linking of FtsZ protofilaments. Its function overlaps with FtsA. The sequence is that of Cell division protein SepF from Pelotomaculum thermopropionicum (strain DSM 13744 / JCM 10971 / SI).